The following is a 263-amino-acid chain: Orotidine 5'-phosphate decarboxylase (263 aa).

Substrate is bound by residues Asp38, 60–62, 91–100, Tyr213, and Arg232; these read KTH and DRKFADIGNT. Lys93 (proton donor) is an active-site residue.

This sequence belongs to the OMP decarboxylase family.

The enzyme catalyses orotidine 5'-phosphate + H(+) = UMP + CO2. It participates in pyrimidine metabolism; UMP biosynthesis via de novo pathway; UMP from orotate: step 2/2. This Rhizomucor pusillus protein is Orotidine 5'-phosphate decarboxylase (PYR4).